The chain runs to 485 residues: NADH-quinone oxidoreductase subunit N (485 aa).

Transmembrane regions (helical) follow at residues L8–I28, F35–V55, G71–A91, F105–L125, S127–F147, Y159–A179, L203–F223, P235–M255, V271–Q291, L297–Q317, V326–L346, A373–I393, W408–V430, and I455–I475.

Belongs to the complex I subunit 2 family. NDH-1 is composed of 13 different subunits. Subunits NuoA, H, J, K, L, M, N constitute the membrane sector of the complex.

The protein localises to the cell inner membrane. It carries out the reaction a quinone + NADH + 5 H(+)(in) = a quinol + NAD(+) + 4 H(+)(out). Functionally, NDH-1 shuttles electrons from NADH, via FMN and iron-sulfur (Fe-S) centers, to quinones in the respiratory chain. The immediate electron acceptor for the enzyme in this species is believed to be ubiquinone. Couples the redox reaction to proton translocation (for every two electrons transferred, four hydrogen ions are translocated across the cytoplasmic membrane), and thus conserves the redox energy in a proton gradient. The protein is NADH-quinone oxidoreductase subunit N of Escherichia coli (strain ATCC 8739 / DSM 1576 / NBRC 3972 / NCIMB 8545 / WDCM 00012 / Crooks).